A 219-amino-acid chain; its full sequence is GTP-binding protein drn-1 (219 aa).

Residues 37 to 44, 56 to 62, 85 to 89, 146 to 149, and 177 to 178 contribute to the GTP site; these read GAGGVGKS, NENYVPT, DTTGS, NKKD, and AK. Positions 59-67 match the Effector region motif; sequence YVPTIEDTY. At C216 the chain carries Cysteine methyl ester. C216 carries the S-geranylgeranyl cysteine lipid modification. The propeptide at 217-219 is removed in mature form; that stretch reads HIM.

It belongs to the small GTPase superfamily. Di-Ras family. Interacts with epac-1 (via C-terminus). Expressed specifically in neurons including the nerve ring, ventral and dorsal nerve cord motor neurons and tail ganglia.

Its subcellular location is the cell membrane. Its function is as follows. Displays low GTPase activity and exists predominantly in the GTP-bound form. Together with epac-1, may regulate acetylcholine release at the neuromuscular junctions probably downstream of G-protein gsa-1 and adenylate cyclase acy-1. This chain is GTP-binding protein drn-1, found in Caenorhabditis elegans.